Reading from the N-terminus, the 354-residue chain is Ornithine transcarbamylase, mitochondrial (354 aa).

Residues Met1–Gln32 constitute a mitochondrion transit peptide. The residue at position 70 (Lys70) is an N6-acetyllysine; alternate. The residue at position 70 (Lys70) is an N6-succinyllysine; alternate. Lys80 carries the post-translational modification N6-succinyllysine. An N6-acetyllysine; alternate modification is found at Lys88. Lys88 is modified (N6-succinyllysine; alternate). Ser90 to Thr93 provides a ligand contact to carbamoyl phosphate. Phosphoserine is present on Ser133. Arg141 is a binding site for carbamoyl phosphate. Lys144 is modified (N6-acetyllysine; alternate). At Lys144 the chain carries N6-succinyllysine; alternate. Carbamoyl phosphate is bound by residues His168 and Gln171. Asn199 contributes to the L-ornithine binding site. N6-acetyllysine; alternate is present on residues Lys221, Lys231, and Lys238. Residues Lys221, Lys231, and Lys238 each carry the N6-succinyllysine; alternate modification. Residue Lys243 is modified to N6-acetyllysine. 3 residues coordinate L-ornithine: Asp263, Ser267, and Met268. 2 positions are modified to N6-succinyllysine: Lys274 and Lys289. The residue at position 292 (Lys292) is an N6-acetyllysine; alternate. Lys292 carries the N6-succinyllysine; alternate modification. Residue Cys303 is the Proton acceptor of the active site. Cys303–Leu304 is a binding site for carbamoyl phosphate. Lys307 is subject to N6-acetyllysine; alternate. Lys307 is modified (N6-succinyllysine; alternate). Arg330 is a binding site for carbamoyl phosphate.

It belongs to the aspartate/ornithine carbamoyltransferase superfamily. OTCase family. Homotrimer. Post-translationally, acetylation at Lys-88 negatively regulates ornithine carbamoyltransferase activity in response to nutrient signals. As to expression, mainly expressed in liver and intestinal mucosa.

It is found in the mitochondrion matrix. The enzyme catalyses carbamoyl phosphate + L-ornithine = L-citrulline + phosphate + H(+). The protein operates within nitrogen metabolism; urea cycle; L-citrulline from L-ornithine and carbamoyl phosphate: step 1/1. With respect to regulation, negatively regulated by lysine acetylation. In terms of biological role, catalyzes the second step of the urea cycle, the condensation of carbamoyl phosphate with L-ornithine to form L-citrulline. The urea cycle ensures the detoxification of ammonia by converting it to urea for excretion. This is Ornithine transcarbamylase, mitochondrial from Homo sapiens (Human).